Consider the following 46-residue polypeptide: MTGKNWILISTTTPKSLEDEIVGRLLKILFVIFVDLISIIYVVITS.

The Cytoplasmic portion of the chain corresponds to 1–21; that stretch reads MTGKNWILISTTTPKSLEDEI. Residues 22–42 traverse the membrane as a helical segment; it reads VGRLLKILFVIFVDLISIIYV. The Lumenal portion of the chain corresponds to 43–46; sequence VITS.

As to quaternary structure, homooligomer. Monomer. Interacts with ATP2A1/SERCA1. Interacts as a monomer with ATP2A2/SERCA2; the interaction inhibits ATP2A2 activity.

The protein localises to the sarcoplasmic reticulum membrane. Inhibits the activity of ATP2A1/SERCA1 ATPase in sarcoplasmic reticulum by decreasing the apparent affinity of the ATPase for Ca(2+), thereby acting as a key regulator of skeletal muscle activity. Its high expression in adult skeletal muscle, suggests that it constitutes the predominant regulator of ATP2A1/SERCA1 in adult skeletal muscle. Also inhibits the activity of ATP2A2/SERCA2 and ATP2A3/SERCA3. The chain is Myoregulin from Homo sapiens (Human).